The primary structure comprises 211 residues: Probable nicotinate-nucleotide adenylyltransferase (211 aa).

The protein belongs to the NadD family.

The enzyme catalyses nicotinate beta-D-ribonucleotide + ATP + H(+) = deamido-NAD(+) + diphosphate. Its pathway is cofactor biosynthesis; NAD(+) biosynthesis; deamido-NAD(+) from nicotinate D-ribonucleotide: step 1/1. Functionally, catalyzes the reversible adenylation of nicotinate mononucleotide (NaMN) to nicotinic acid adenine dinucleotide (NaAD). This chain is Probable nicotinate-nucleotide adenylyltransferase, found in Cellvibrio japonicus (strain Ueda107) (Pseudomonas fluorescens subsp. cellulosa).